Here is a 407-residue protein sequence, read N- to C-terminus: Serine/threonine transporter SstT (407 aa).

Transmembrane regions (helical) follow at residues 14-34, 48-68, 82-102, 141-161, 192-212, 218-238, 290-310, 316-336, and 363-383; these read GSLV…ATVS, FVGA…AASI, IVIL…LMSF, AVIT…GLAL, IGIF…AIAG, LVLL…IVFF, IPLG…ILTL, MGIQ…GVSA, and VAMQ…SAET.

It belongs to the dicarboxylate/amino acid:cation symporter (DAACS) (TC 2.A.23) family.

It is found in the cell inner membrane. It carries out the reaction L-serine(in) + Na(+)(in) = L-serine(out) + Na(+)(out). The catalysed reaction is L-threonine(in) + Na(+)(in) = L-threonine(out) + Na(+)(out). In terms of biological role, involved in the import of serine and threonine into the cell, with the concomitant import of sodium (symport system). In Shewanella pealeana (strain ATCC 700345 / ANG-SQ1), this protein is Serine/threonine transporter SstT.